We begin with the raw amino-acid sequence, 898 residues long: Serine/threonine-protein kinase TAO3 (898 aa).

One can recognise a Protein kinase domain in the interval 24 to 277 (FIDLHEIGHG…AVELLRHDFI (254 aa)). Residues 30 to 38 (IGHGSFGAV) and lysine 53 each bind ATP. Aspartate 147 serves as the catalytic Proton acceptor. Disordered regions lie at residues 316–375 (TRNG…DESS) and 405–424 (DEAGHGDPRPEPRPTQSVQS). Serine 324 is modified (phosphoserine; by ATM). Phosphoserine is present on residues serine 343, serine 346, and serine 349. Positions 349-366 (SIPSTSVSTGSRSSSVNS) are enriched in low complexity. At threonine 357 the chain carries Phosphothreonine. Residue serine 359 is modified to Phosphoserine. Basic and acidic residues predominate over residues 405 to 416 (DEAGHGDPRPEP). Serine 442 carries the post-translational modification Phosphoserine. 3 coiled-coil regions span residues 452–502 (EQEN…THAN), 548–649 (FLES…HAML), and 754–871 (LKTL…QERE). The segment at 565–596 (EEMNEDHSTPKKEKQERISKHKENLQHTQAEE) is disordered. The residue at position 830 (lysine 830) is an N6-acetyllysine.

The protein belongs to the protein kinase superfamily. STE Ser/Thr protein kinase family. STE20 subfamily. As to quaternary structure, self-associates. Interacts with ERN1 and TRAF2. Interaction with TRAF2 is facilitated under ER stress conditions, such as treatment with tunicamycin, and may promote TRAF2 phosphorylation. Interacts (via N-terminus) with STK25; the interaction promotes STK25 abundance at the level of protein expression and/or stability. In terms of processing, autophosphorylated. Phosphorylation at Ser-324 by ATM following DNA damage is required for activation of the p38/MAPK14 stress-activated MAPK cascade. Phosphorylated at Ser-324 and on Tyr residues during T cell activation. Phosphorylated by LRRK2.

The protein resides in the cytoplasm. The protein localises to the cell membrane. It localises to the membrane raft. It is found in the lipid droplet. It catalyses the reaction L-seryl-[protein] + ATP = O-phospho-L-seryl-[protein] + ADP + H(+). The enzyme catalyses L-threonyl-[protein] + ATP = O-phospho-L-threonyl-[protein] + ADP + H(+). Functionally, serine/threonine-protein kinase that acts as a regulator of the p38/MAPK14 stress-activated MAPK cascade and of the MAPK8/JNK cascade. In response to DNA damage, involved in the G2/M transition DNA damage checkpoint by activating the p38/MAPK14 stress-activated MAPK cascade, probably by mediating phosphorylation of upstream MAP2K3 and MAP2K6 kinases. Inhibits basal activity of the MAPK8/JNK cascade and diminishes its activation in response to epidermal growth factor (EGF). Positively regulates canonical T cell receptor (TCR) signaling by preventing early PTPN6/SHP1-mediated inactivation of LCK, ensuring sustained TCR signaling that is required for optimal activation and differentiation of T cells. Phosphorylates PTPN6/SHP1 on 'Thr-394', leading to its polyubiquitination and subsequent proteasomal degradation. Required for cell surface expression of metalloprotease ADAM10 on type 1 transitional B cells which is necessary for their NOTCH-mediated development into marginal zone B cells. Also required for the NOTCH-mediated terminal differentiation of splenic conventional type 2 dendritic cells. Positively regulates osteoblast differentiation by acting as an upstream activator of the JNK pathway. Promotes JNK signaling in hepatocytes and positively regulates hepatocyte lipid storage by inhibiting beta-oxidation and triacylglycerol secretion while enhancing lipid synthesis. Restricts age-associated inflammation by negatively regulating differentiation of macrophages and their production of pro-inflammatory cytokines. Plays a role in negatively regulating the abundance of regulatory T cells in white adipose tissue. In Mus musculus (Mouse), this protein is Serine/threonine-protein kinase TAO3 (Taok3).